Reading from the N-terminus, the 67-residue chain is MPGVYLDDNEYNFDIALRRFKKQVEKAGVLSEMKKRQHFEKPSVMRKKKKAAARKRLLKKMRKANMG.

Belongs to the bacterial ribosomal protein bS21 family.

In Oleidesulfovibrio alaskensis (strain ATCC BAA-1058 / DSM 17464 / G20) (Desulfovibrio alaskensis), this protein is Small ribosomal subunit protein bS21.